A 360-amino-acid chain; its full sequence is POU domain, class 5, transcription factor 1 (360 aa).

Disordered regions lie at residues 1–48 and 86–137; these read MAGH…SGIG and PPGG…EESQ. Residues 4 to 12 carry the 9aaTAD motif; sequence HLASDFAFS. Residue Ser111 is modified to Phosphoserine; by MAPK. Residue Lys123 forms a Glycyl lysine isopeptide (Lys-Gly) (interchain with G-Cter in SUMO) linkage. Positions 123 to 137 are enriched in basic and acidic residues; it reads KLDKEKLEPNPEESQ. The POU-specific domain maps to 138-212; that stretch reads DIKALQKDLE…LLQKWVEEAD (75 aa). Positions 157 and 164 each coordinate DNA. 2 DNA-binding regions span residues 180 to 186 and 193 to 196; these read SQTTICR and SFKN. Residues 230-289 constitute a DNA-binding region (homeobox); sequence RKRKRTSIENRVRGNLESMFLQCPKPTLQQISHIAQQLGLEKDVVRVWFCNRRQKGKRSS. Thr235 is subject to Phosphothreonine. Phosphoserine occurs at positions 236, 289, 290, and 355. Residues 287–322 form a disordered region; the sequence is RSSSDYSQREDFEAAGSPFTGGPVSSPLAPGPHFGT.

It belongs to the POU transcription factor family. Class-5 subfamily. Interacts with PKM. Interacts with WWP2. Interacts with UBE2I and ZSCAN10. Interacts with PCGF1. Interacts with ESRRB; recruits ESRRB near the POU5F1-SOX2 element in the NANOG proximal promoter; the interaction is DNA independent. Interacts with MAPK8 and MAPK9; the interaction allows MAPK8 and MAPK9 to phosphorylate POU5F1 on Ser-355. Interacts (when phosphorylated on Ser-355) with FBXW8. Interacts with FBXW4. Interacts with SOX2 and SOX15; binds synergistically with either SOX2 or SOX15 to DNA. Interacts with DDX56. Post-translationally, sumoylation enhances the protein stability, DNA binding and transactivation activity. Sumoylation is required for enhanced YES1 expression. Ubiquitinated; undergoes 'Lys-63'-linked polyubiquitination by WWP2 leading to proteasomal degradation. In terms of processing, ERK1/2-mediated phosphorylation at Ser-111 promotes nuclear exclusion and proteasomal degradation. Phosphorylation at Thr-235 and Ser-236 decrease DNA-binding and alters ability to activate transcription. As to expression, expressed in immature oocytes.

The protein localises to the cytoplasm. It localises to the nucleus. Its function is as follows. Transcription factor that binds to the octamer motif (5'-ATTTGCAT-3'). Forms a trimeric complex with SOX2 or SOX15 on DNA and controls the expression of a number of genes involved in embryonic development such as YES1, FGF4, UTF1 and ZFP206. Critical for early embryogenesis and for embryonic stem cell pluripotency. The protein is POU domain, class 5, transcription factor 1 (POU5F1) of Bos taurus (Bovine).